Here is a 190-residue protein sequence, read N- to C-terminus: Potassium-transporting ATPase KdpC subunit (190 aa).

Residues 10-30 (TFIFLLLITGGVYPLLTTALG) form a helical membrane-spanning segment.

The protein belongs to the KdpC family. In terms of assembly, the system is composed of three essential subunits: KdpA, KdpB and KdpC.

The protein localises to the cell inner membrane. In terms of biological role, part of the high-affinity ATP-driven potassium transport (or Kdp) system, which catalyzes the hydrolysis of ATP coupled with the electrogenic transport of potassium into the cytoplasm. This subunit acts as a catalytic chaperone that increases the ATP-binding affinity of the ATP-hydrolyzing subunit KdpB by the formation of a transient KdpB/KdpC/ATP ternary complex. In Escherichia coli O157:H7, this protein is Potassium-transporting ATPase KdpC subunit.